A 130-amino-acid chain; its full sequence is NADH-ubiquinone oxidoreductase chain 1 (130 aa).

The helical transmembrane segment at 45-65 threads the bilayer; the sequence is SILFMSLFSVMFCLVVYSYLW.

This sequence belongs to the complex I subunit 1 family.

Its subcellular location is the mitochondrion inner membrane. The enzyme catalyses a ubiquinone + NADH + 5 H(+)(in) = a ubiquinol + NAD(+) + 4 H(+)(out). In terms of biological role, core subunit of the mitochondrial membrane respiratory chain NADH dehydrogenase (Complex I) that is believed to belong to the minimal assembly required for catalysis. Complex I functions in the transfer of electrons from NADH to the respiratory chain. The immediate electron acceptor for the enzyme is believed to be ubiquinone. The protein is NADH-ubiquinone oxidoreductase chain 1 (ND1) of Artemia salina (Brine shrimp).